Here is a 395-residue protein sequence, read N- to C-terminus: Transmembrane protein 79 (395 aa).

The segment at 1-115 is disordered; that stretch reads MTEPETLALL…PPTKLEELPE (115 aa). The Cytoplasmic segment spans residues 1-204; that stretch reads MTEPETLALL…GREALRAVAS (204 aa). The helical transmembrane segment at 205–225 threads the bilayer; sequence VGAALILFPCLLYGAYAFLPF. Residues 226 to 244 lie on the Extracellular side of the membrane; sequence DAPRLPTMSSRLIYTLRCG. The chain crosses the membrane as a helical span at residues 245 to 265; it reads VFATFPIVLGILVYGLSLLCF. Residues 266–290 lie on the Cytoplasmic side of the membrane; the sequence is AALRPFGEPRREVEIHRQYVAQSVQ. The helical transmembrane segment at 291–311 threads the bilayer; the sequence is LFILYFFNLAVLSTYLPQDAL. Residues 312 to 313 are Extracellular-facing; that stretch reads KL. A helical membrane pass occupies residues 314 to 334; sequence LPLLTGLFAISRLIYWLTFAV. Over 335 to 343 the chain is Cytoplasmic; the sequence is GRSFRGFGY. Residues 344–364 form a helical membrane-spanning segment; sequence GLTFLPLLSMLLWNFYYMFVV. The Extracellular segment spans residues 365–395; it reads EPERMLTASESRLDYPDHARSASDYRPRSRG.

It is found in the lysosome. It localises to the golgi apparatus. The protein resides in the trans-Golgi network. The protein localises to the membrane. In terms of biological role, contributes to the epidermal integrity and skin barrier function. Plays a role in the lamellar granule (LG) secretory system and in the stratum corneum (SC) epithelial cell formation. The chain is Transmembrane protein 79 (TMEM79) from Bos taurus (Bovine).